The following is a 101-amino-acid chain: MTTNNLVLSGTITRSRRFKSPAGIAHSVIMLEHKSQRYEADMLRNVYVQIQVILSGPRFESVAEDLKAGVEVQVQGFMTLQQGRNGQNRLVIHAENVELKT.

Residues 1 to 101 (MTTNNLVLSG…IHAENVELKT (101 aa)) enclose the SSB domain.

It belongs to the PriB family. Homodimer. Interacts with PriA and DnaT. Component of the replication restart primosome. Primosome assembly occurs via a 'hand-off' mechanism. PriA binds to replication forks, subsequently PriB then DnaT bind; DnaT then displaces ssDNA to generate the helicase loading substrate.

Involved in the restart of stalled replication forks, which reloads the replicative helicase on sites other than the origin of replication; the PriA-PriB pathway is the major replication restart pathway. During primosome assembly it facilitates complex formation between PriA and DnaT on DNA; stabilizes PriA on DNA. Stimulates the DNA unwinding activity of PriA helicase. The protein is Replication restart protein PriB of Shewanella baltica (strain OS223).